The chain runs to 340 residues: S-adenosylmethionine:tRNA ribosyltransferase-isomerase (340 aa).

The protein belongs to the QueA family. Monomer.

Its subcellular location is the cytoplasm. It carries out the reaction 7-aminomethyl-7-carbaguanosine(34) in tRNA + S-adenosyl-L-methionine = epoxyqueuosine(34) in tRNA + adenine + L-methionine + 2 H(+). It participates in tRNA modification; tRNA-queuosine biosynthesis. Its function is as follows. Transfers and isomerizes the ribose moiety from AdoMet to the 7-aminomethyl group of 7-deazaguanine (preQ1-tRNA) to give epoxyqueuosine (oQ-tRNA). In Vesicomyosocius okutanii subsp. Calyptogena okutanii (strain HA), this protein is S-adenosylmethionine:tRNA ribosyltransferase-isomerase.